The chain runs to 202 residues: Casparian strip membrane protein 1 (202 aa).

A compositionally biased stretch (polar residues) spans 1–13 (MEKSESSTIQIAE). A disordered region spans residues 1-30 (MEKSESSTIQIAESSKDRKGKAPLLPPPVH). Topologically, residues 1 to 42 (MEKSESSTIQIAESSKDRKGKAPLLPPPVHHERAAGYKRGVA) are cytoplasmic. The helical transmembrane segment at 43–63 (IFDLILRISAATAALAATIVM) threads the bilayer. The Extracellular segment spans residues 64 to 90 (GTTEQTLPFFTQFFQFRASYDDLPTFT). A helical transmembrane segment spans residues 91-111 (FFVIAMAIVTGYLILSVPFSI). Over 112–130 (VCIARPVVAAPRILLILCD) the chain is Cytoplasmic. A helical transmembrane segment spans residues 131-151 (TLTVTLATSAAGASAAIVYLA). Residues 152 to 177 (HNGXSDANWLAICQQFNDFCQRVSGA) are Extracellular-facing. A helical membrane pass occupies residues 178 to 198 (VVAAFVSAVLLIFLVVLSAIV). Residues 199-202 (LKKH) lie on the Cytoplasmic side of the membrane.

The protein belongs to the Casparian strip membrane proteins (CASP) family. Homodimer and heterodimers.

Its subcellular location is the cell membrane. In terms of biological role, regulates membrane-cell wall junctions and localized cell wall deposition. Required for establishment of the Casparian strip membrane domain (CSD) and the subsequent formation of Casparian strips, a cell wall modification of the root endodermis that determines an apoplastic barrier between the intraorganismal apoplasm and the extraorganismal apoplasm and prevents lateral diffusion. In Triphysaria pusilla (Dwarf owl's-clover), this protein is Casparian strip membrane protein 1.